We begin with the raw amino-acid sequence, 380 residues long: Glycerate kinase (380 aa).

The protein belongs to the glycerate kinase type-1 family.

It carries out the reaction (R)-glycerate + ATP = (2R)-3-phosphoglycerate + ADP + H(+). The chain is Glycerate kinase (glxK) from Halalkalibacterium halodurans (strain ATCC BAA-125 / DSM 18197 / FERM 7344 / JCM 9153 / C-125) (Bacillus halodurans).